Consider the following 212-residue polypeptide: External core antigen (212 aa).

The first 19 residues, 1-19 (MQLFHLCLIISCSCPTVQA), serve as a signal peptide directing secretion. The tract at residues 25 to 27 (GWL) is HBEAG. A disordered region spans residues 172–212 (LPETTVVRRRGRSPRRRTPSPRRRRSQSPRRRRSQSRESQC). Over residues 178-205 (VRRRGRSPRRRTPSPRRRRSQSPRRRRS) the composition is skewed to basic residues. A 1; half-length repeat occupies 184–190 (SPRRRTP). The 3 X 8 AA repeats of S-P-R-R-R-R-S-Q stretch occupies residues 184 to 206 (SPRRRTPSPRRRRSQSPRRRRSQ). Positions 184–212 (SPRRRTPSPRRRRSQSPRRRRSQSRESQC) are excised as a propeptide. A run of 2 repeats spans residues 191–198 (SPRRRRSQ) and 199–206 (SPRRRRSQ).

It belongs to the orthohepadnavirus precore antigen family. Homodimerizes. Post-translationally, phosphorylated. Cleaved by host furin.

The protein localises to the secreted. The protein resides in the host nucleus. May regulate immune response to the intracellular capsid in acting as a T-cell tolerogen, by having an immunoregulatory effect which prevents destruction of infected cells by cytotoxic T-cells. This immune regulation may predispose to chronicity during perinatal infections and prevent severe liver injury during adult infections. This Hepatitis B virus genotype D (isolate Germany/1-91/1991) (HBV-D) protein is External core antigen.